The chain runs to 217 residues: Large ribosomal subunit protein uL3 (217 aa).

It belongs to the universal ribosomal protein uL3 family. As to quaternary structure, part of the 50S ribosomal subunit. Forms a cluster with proteins L14 and L19.

One of the primary rRNA binding proteins, it binds directly near the 3'-end of the 23S rRNA, where it nucleates assembly of the 50S subunit. The chain is Large ribosomal subunit protein uL3 from Mycobacterium bovis (strain ATCC BAA-935 / AF2122/97).